We begin with the raw amino-acid sequence, 308 residues long: Methionyl-tRNA formyltransferase (308 aa).

(6S)-5,6,7,8-tetrahydrofolate is bound at residue 109 to 112; the sequence is SLLP.

Belongs to the Fmt family.

The catalysed reaction is L-methionyl-tRNA(fMet) + (6R)-10-formyltetrahydrofolate = N-formyl-L-methionyl-tRNA(fMet) + (6S)-5,6,7,8-tetrahydrofolate + H(+). Attaches a formyl group to the free amino group of methionyl-tRNA(fMet). The formyl group appears to play a dual role in the initiator identity of N-formylmethionyl-tRNA by promoting its recognition by IF2 and preventing the misappropriation of this tRNA by the elongation apparatus. The chain is Methionyl-tRNA formyltransferase from Phenylobacterium zucineum (strain HLK1).